The sequence spans 384 residues: Acetylornithine aminotransferase (384 aa).

Residues 95-96 (GA) and F122 each bind pyridoxal 5'-phosphate. R125 is a N(2)-acetyl-L-ornithine binding site. Residue 207–210 (DEIQ) coordinates pyridoxal 5'-phosphate. K236 carries the post-translational modification N6-(pyridoxal phosphate)lysine. Residue S264 coordinates N(2)-acetyl-L-ornithine. Pyridoxal 5'-phosphate is bound at residue T265.

Belongs to the class-III pyridoxal-phosphate-dependent aminotransferase family. ArgD subfamily. In terms of assembly, homodimer. It depends on pyridoxal 5'-phosphate as a cofactor.

Its subcellular location is the cytoplasm. It catalyses the reaction N(2)-acetyl-L-ornithine + 2-oxoglutarate = N-acetyl-L-glutamate 5-semialdehyde + L-glutamate. It participates in amino-acid biosynthesis; L-arginine biosynthesis; N(2)-acetyl-L-ornithine from L-glutamate: step 4/4. This chain is Acetylornithine aminotransferase, found in Halalkalibacterium halodurans (strain ATCC BAA-125 / DSM 18197 / FERM 7344 / JCM 9153 / C-125) (Bacillus halodurans).